We begin with the raw amino-acid sequence, 247 residues long: Proteasome subunit alpha type-7-1 (247 aa).

It belongs to the peptidase T1A family. The 26S proteasome consists of a 20S proteasome core and two 19S regulatory subunits. The 20S proteasome core is composed of 28 subunits that are arranged in four stacked rings, resulting in a barrel-shaped structure. The two end rings are each formed by seven alpha subunits, and the two central rings are each formed by seven beta subunits. The catalytic chamber with the active sites is on the inside of the barrel.

It is found in the cytoplasm. The protein localises to the nucleus. Functionally, the proteasome is a multicatalytic proteinase complex which is characterized by its ability to cleave peptides with Arg, Phe, Tyr, Leu, and Glu adjacent to the leaving group at neutral or slightly basic pH. The proteasome has an ATP-dependent proteolytic activity. This is Proteasome subunit alpha type-7-1 (Pros28.1) from Drosophila virilis (Fruit fly).